We begin with the raw amino-acid sequence, 85 residues long: Large ribosomal subunit protein bL27 (85 aa).

The disordered stretch occupies residues 1-27 (MAHKKAGGSTKNGRDSQSKRLGVKRYG).

It belongs to the bacterial ribosomal protein bL27 family.

The polypeptide is Large ribosomal subunit protein bL27 (Halorhodospira halophila (strain DSM 244 / SL1) (Ectothiorhodospira halophila (strain DSM 244 / SL1))).